The sequence spans 39 residues: Photosystem II reaction center protein L (39 aa).

Residues 18 to 38 (SLYLGLLLVAVLGILFSSYFF) form a helical membrane-spanning segment.

Belongs to the PsbL family. In terms of assembly, PSII is composed of 1 copy each of membrane proteins PsbA, PsbB, PsbC, PsbD, PsbE, PsbF, PsbH, PsbI, PsbJ, PsbK, PsbL, PsbM, PsbT, PsbX, PsbY, PsbZ, Psb30/Ycf12, peripheral proteins PsbO, CyanoQ (PsbQ), PsbU, PsbV and a large number of cofactors. It forms dimeric complexes.

The protein localises to the cellular thylakoid membrane. One of the components of the core complex of photosystem II (PSII). PSII is a light-driven water:plastoquinone oxidoreductase that uses light energy to abstract electrons from H(2)O, generating O(2) and a proton gradient subsequently used for ATP formation. It consists of a core antenna complex that captures photons, and an electron transfer chain that converts photonic excitation into a charge separation. This subunit is found at the monomer-monomer interface and is required for correct PSII assembly and/or dimerization. The polypeptide is Photosystem II reaction center protein L (Rippkaea orientalis (strain PCC 8801 / RF-1) (Cyanothece sp. (strain PCC 8801))).